A 507-amino-acid polypeptide reads, in one-letter code: Protein disulfide-isomerase (507 aa).

Residues 1–20 form the signal peptide; that stretch reads MASMVSFCFLLLFLAFFASS. Residues 21–144 enclose the Thioredoxin 1 domain; it reads FNEIYAEESE…IVDYLKKQSG (124 aa). Catalysis depends on nucleophile residues Cys-62 and Cys-65. A disulfide bridge links Cys-62 with Cys-65. 2 N-linked (GlcNAc...) asparagine glycosylation sites follow: Asn-181 and Asn-278. The 121-residue stretch at 365–485 folds into the Thioredoxin 2 domain; that stretch reads YRKSEPIPEH…FIEFIEKNRE (121 aa). Residues Cys-407 and Cys-410 each act as nucleophile in the active site. Cysteines 407 and 410 form a disulfide. The segment at 484 to 507 is disordered; that stretch reads REKSSKKESIVKDDQTDSETKAEL. A Prevents secretion from ER motif is present at residues 504 to 507; that stretch reads KAEL.

It belongs to the protein disulfide isomerase family.

It is found in the endoplasmic reticulum lumen. The catalysed reaction is Catalyzes the rearrangement of -S-S- bonds in proteins.. Participates in the folding of proteins containing disulfide bonds, may be involved in glycosylation, prolyl hydroxylation and triglyceride transfer. This is Protein disulfide-isomerase (PDI) from Datisca glomerata (Durango root).